The chain runs to 619 residues: Trihelix transcription factor GTL2 (619 aa).

2 disordered regions span residues 11–41 (HRFI…VSFS) and 62–100 (HHHH…HHHH). Residues 16–27 (SPPPPPPLPPHQ) show a composition bias toward pro residues. A Myb-like 1 domain is found at 102 to 154 (PWCSDEVLALLRFRSTVENWFPEFTWEHTSRKLAEVGFKRSPQECKEKFEEEE). The stretch at 307-361 (VRNMIAQQEEMHKKLLEDMVKKEEEKIAREEAWKKQEIERVNKEVEIRAQEQAMA) forms a coiled coil. Disordered stretches follow at residues 382–414 (VVQN…SSLL) and 434–458 (STKT…DLGK). The segment covering 384–396 (QNPTSPSQDSSSL) has biased composition (polar residues). Residues 435-444 (TKTLKPKNQN) are compositionally biased toward low complexity. Over residues 448–458 (PKSDDKSDLGK) the composition is skewed to basic and acidic residues. In terms of domain architecture, Myb-like 2 spans 459–526 (RWPKDEVLAL…RCKEKWENIN (68 aa)). A Nuclear localization signal motif is present at residues 503–510 (SKKMLEIG). Positions 557 to 619 (SQPPTGTTAT…VQFSGFDLEF (63 aa)) are disordered. The span at 561–574 (TGTTATTATTATSA) shows a compositional bias: low complexity. Positions 575-585 (RDLDTRPEENR) are enriched in basic and acidic residues.

The protein localises to the nucleus. Functionally, probable transcription factor that binds specific DNA sequence. The protein is Trihelix transcription factor GTL2 of Arabidopsis thaliana (Mouse-ear cress).